The chain runs to 610 residues: MAPNLLTIGLLLTLIASGQAHLNIFLNLHEVLRLIGVSAELYYVREGAINDYALNFAVPVPANISDVTFTWQSLVDHPLPYSINIATSDTEVLPRPILNISRIGDVPVEPQTWGIALKCSGTRNAEVTVTINVEVILDRATNNNTNLIFKRKKICLREEQDSAHEEYDDDDLDLLQTARKGHGGDIHYVDRNDEHVVANGHQAPEKQRPVVTESPVGRGNSGGSKRDFDPMLRENLVPPASGLVTLIVGGILALVLVSTLILIAYCAKGPSKRHPSNGVHLIKTSSFQRLPTISSTAHNSIYVCPSTITPTYATLTRPFREYEHEPEEFNRRLQELTVQKCRVRLSCLVQEGNFGRIYRGTYNDCQEVLVKTVAQHASQLQVNLLLQESMMLYEASHPNVLSVLGISIEDYATPFVLYAATGSVRNLKSFLQDPSYARSVTTIQTVLMGSQLAMAMEHLHNHGVIHKDIAARNCVIDDQLRVKLTDSALSRDLFPGDYNSLGDGEYRPIKWLSLEALQKSHYNEGSDVWSFGVLMWEMCTLGKLPYAEIDPYEMEHYLKDGYRLAQPFNCPDELFTIMAYCWASMPAERPSFSQLQICLSEFHTQITRYV.

Residues 1–20 (MAPNLLTIGLLLTLIASGQA) form the signal peptide. Topologically, residues 21–242 (HLNIFLNLHE…RENLVPPASG (222 aa)) are extracellular. A WIF domain is found at 24 to 155 (IFLNLHEVLR…NLIFKRKKIC (132 aa)). N-linked (GlcNAc...) asparagine glycosylation is found at Asn63, Asn99, and Asn143. The interval 202 to 230 (QAPEKQRPVVTESPVGRGNSGGSKRDFDP) is disordered. The helical transmembrane segment at 243–263 (LVTLIVGGILALVLVSTLILI) threads the bilayer. Topologically, residues 264-610 (AYCAKGPSKR…EFHTQITRYV (347 aa)) are cytoplasmic. A Protein kinase domain is found at 343–606 (VRLSCLVQEG…ICLSEFHTQI (264 aa)). ATP contacts are provided by residues 349-357 (VQEGNFGRI) and Lys371. Asp468 acts as the Proton acceptor in catalysis. Tyr498 is subject to Phosphotyrosine; by autocatalysis.

It belongs to the protein kinase superfamily. Tyr protein kinase family. In the embryonic abdominal hemisegment, expression is restricted to cell body, axon and growth cone of a cluster of 20 ventral nerve cord interneurons. During muscle growth and attachment events in the embryonic abdominal hemisegment, expression is in somatic muscle fibers 21-23 at 10-13 hours and 2 patches of approximately 15 neighboring epidermal cells (dorsal and ventral attachment sites) at 6-13 hours.

The protein localises to the cell membrane. It carries out the reaction L-tyrosyl-[protein] + ATP = O-phospho-L-tyrosyl-[protein] + ADP + H(+). Probable coreceptor of Wnt proteins. Involved in neuronal pathway recognition and ventral muscle attachment site selection. Non-vital for development. May be part of a signal transduction cascade involved in learning and possibly memory. The sequence is that of Tyrosine-protein kinase Drl (drl) from Drosophila melanogaster (Fruit fly).